The chain runs to 176 residues: CDP-archaeol synthase (176 aa).

The next 4 helical transmembrane spans lie at 41-61 (GLIG…FLYN), 73-93 (IITV…KSYF), 114-134 (VVGS…LNWF), and 138-158 (FDSV…SPLL).

It belongs to the CDP-archaeol synthase family. Requires Mg(2+) as cofactor.

It localises to the cell membrane. It carries out the reaction 2,3-bis-O-(geranylgeranyl)-sn-glycerol 1-phosphate + CTP + H(+) = CDP-2,3-bis-O-(geranylgeranyl)-sn-glycerol + diphosphate. The protein operates within membrane lipid metabolism; glycerophospholipid metabolism. Its function is as follows. Catalyzes the formation of CDP-2,3-bis-(O-geranylgeranyl)-sn-glycerol (CDP-archaeol) from 2,3-bis-(O-geranylgeranyl)-sn-glycerol 1-phosphate (DGGGP) and CTP. This reaction is the third ether-bond-formation step in the biosynthesis of archaeal membrane lipids. The sequence is that of CDP-archaeol synthase from Methanocorpusculum labreanum (strain ATCC 43576 / DSM 4855 / Z).